The following is a 359-amino-acid chain: Trans-enoyl reductase FSL5 (359 aa).

An NADP(+)-binding site is contributed by 47-50 (IDGK). Substrate is bound at residue 134-141 (SGVGTIGL). Residues 169 to 172 (STAT), 192 to 195 (SPHN), Y210, and 257 to 258 (LE) contribute to the NADP(+) site. Residue 277–281 (GPTLL) participates in substrate binding. 346 to 347 (VS) contacts NADP(+).

This sequence belongs to the zinc-containing alcohol dehydrogenase family. As to quaternary structure, monomer.

The protein operates within secondary metabolite biosynthesis. In terms of biological role, trans-enoyl reductase; part of the gene cluster that mediates the biosynthesis of fusarielins F, G and H, decaketide compounds with 5 methylations and a decaline core that act as mycoestrogens as they stimulate growth of MCF-7 breast cancer cells. The initial compound in the pathway is produced by the reducing polyketide synthase FSL1. FSL1 lacks an active enoyl reductase (ER) domain and biosynthesis of fusarielins relies on the trans-acting enoyl reductase FSL5, before it is released through hydrolysis catalyzed by the thioesterase FSL2. Fusarielins F, G, and H have a C11=C12 cis double bond and is fully reduced between C10 and C11 and between C12 and C13. FSL3 can be involved in the formation of the C11=C12 cis double bond by moving a hypothetical C10=C11 or C12=C13 trans double bond to form prefusarielin. Prefusarielin is oxygenated at C15 and C16 by the cytochrome P450 monooxygenase FSL4, resulting in fusarielin F, which subsequently is epoxidized into fusarielin G by the same enzyme. The final step in the pathway is a reduction of the carboxylic acid moiety to yield fusarielin H via a still undetermined mechanism. The chain is Trans-enoyl reductase FSL5 from Gibberella zeae (strain ATCC MYA-4620 / CBS 123657 / FGSC 9075 / NRRL 31084 / PH-1) (Wheat head blight fungus).